Consider the following 127-residue polypeptide: Small ribosomal subunit protein uS13 (127 aa).

The interval 92-127 is disordered; the sequence is HRMGLPVRGQRTRTNARTRRGVRRTVAGKKKASAKK. The span at 101-127 shows a compositional bias: basic residues; the sequence is QRTRTNARTRRGVRRTVAGKKKASAKK.

It belongs to the universal ribosomal protein uS13 family. As to quaternary structure, part of the 30S ribosomal subunit. Forms a loose heterodimer with protein S19. Forms two bridges to the 50S subunit in the 70S ribosome.

Its function is as follows. Located at the top of the head of the 30S subunit, it contacts several helices of the 16S rRNA. In the 70S ribosome it contacts the 23S rRNA (bridge B1a) and protein L5 of the 50S subunit (bridge B1b), connecting the 2 subunits; these bridges are implicated in subunit movement. Contacts the tRNAs in the A and P-sites. The protein is Small ribosomal subunit protein uS13 of Trichodesmium erythraeum (strain IMS101).